The sequence spans 179 residues: uncharacterized protein (179 aa).

2 stretches are compositionally biased toward polar residues: residues 1-37 and 60-70; these read PLGA…TNPG and IPTQSTTTFRS. Disordered regions lie at residues 1-41 and 60-82; these read PLGA…PSAK and IPTQ…PGRR.

As to expression, component of the acid-soluble and acid-insoluble organic matrix of calcified shell layers (at protein level).

It localises to the secreted. This is an uncharacterized protein from Haliotis asinina (Donkey's ear abalone).